The sequence spans 365 residues: Delta(7)-sterol 5(6)-desaturase ERG3 (365 aa).

Residues 1 to 92 lie on the Cytoplasmic side of the membrane; the sequence is MDLVLEVADH…LLPRSSILRE (92 aa). A helical transmembrane segment spans residues 93-113; that stretch reads FLSLWVIVTIFGLLLYLFTAS. Residues 114–140 lie on the Lumenal side of the membrane; that stretch reads LSYVFVFDKSIFNHPRYLKNQMAMEIK. Residues 141 to 161 form a helical membrane-spanning segment; it reads LAVSAIPWMSMLTVPWFVMEL. At 162–242 the chain is on the cytoplasmic side; it reads NGHSKLYMKI…VDGFLQSISY (81 aa). One can recognise a Fatty acid hydroxylase domain in the interval 187–311; the sequence is TFIFFTDCGV…FTTLWDRLGG (125 aa). Positions 200-204 match the Histidine box-1 motif; the sequence is HRWLH. The Histidine box-2 signature appears at 213–217; sequence HKPHH. Residues 243–263 form a helical membrane-spanning segment; the sequence is HIYPLILPLHKVSYLILFTFV. Residues 264-365 are Lumenal-facing; the sequence is NFWTVMIHDG…ENDPNTKKNN (102 aa). Residues 288–292 carry the Histidine box-3 motif; that stretch reads HTVHH. Residues K324 and K344 each participate in a glycyl lysine isopeptide (Lys-Gly) (interchain with G-Cter in ubiquitin) cross-link.

Belongs to the sterol desaturase family. In terms of assembly, interacts with ERG28. Fe cation serves as cofactor.

The protein localises to the endoplasmic reticulum membrane. It catalyses the reaction episterol + 2 Fe(II)-[cytochrome b5] + O2 + 2 H(+) = 5-dehydroepisterol + 2 Fe(III)-[cytochrome b5] + 2 H2O. It functions in the pathway steroid metabolism; ergosterol biosynthesis; ergosterol from zymosterol: step 3/5. Its function is as follows. C-5 sterol desaturase; part of the third module of ergosterol biosynthesis pathway that includes the late steps of the pathway. ERG3 catalyzes the introduction of a C-5 double bond in the B ring to produce 5-dehydroepisterol. The third module or late pathway involves the ergosterol synthesis itself through consecutive reactions that mainly occur in the endoplasmic reticulum (ER) membrane. Firstly, the squalene synthase ERG9 catalyzes the condensation of 2 farnesyl pyrophosphate moieties to form squalene, which is the precursor of all steroids. Squalene synthase is crucial for balancing the incorporation of farnesyl diphosphate (FPP) into sterol and nonsterol isoprene synthesis. Secondly, the squalene epoxidase ERG1 catalyzes the stereospecific oxidation of squalene to (S)-2,3-epoxysqualene, which is considered to be a rate-limiting enzyme in steroid biosynthesis. Then, the lanosterol synthase ERG7 catalyzes the cyclization of (S)-2,3 oxidosqualene to lanosterol, a reaction that forms the sterol core. In the next steps, lanosterol is transformed to zymosterol through a complex process involving various demethylation, reduction and desaturation reactions. The lanosterol 14-alpha-demethylase ERG11 (also known as CYP51) catalyzes C14-demethylation of lanosterol to produce 4,4'-dimethyl cholesta-8,14,24-triene-3-beta-ol, which is critical for ergosterol biosynthesis. The C-14 reductase ERG24 reduces the C14=C15 double bond of 4,4-dimethyl-cholesta-8,14,24-trienol to produce 4,4-dimethyl-cholesta-8,24-dienol. 4,4-dimethyl-cholesta-8,24-dienol is substrate of the C-4 demethylation complex ERG25-ERG26-ERG27 in which ERG25 catalyzes the three-step monooxygenation required for the demethylation of 4,4-dimethyl and 4alpha-methylsterols, ERG26 catalyzes the oxidative decarboxylation that results in a reduction of the 3-beta-hydroxy group at the C-3 carbon to an oxo group, and ERG27 is responsible for the reduction of the keto group on the C-3. ERG28 has a role as a scaffold to help anchor ERG25, ERG26 and ERG27 to the endoplasmic reticulum and ERG29 regulates the activity of the iron-containing C4-methylsterol oxidase ERG25. Then, the sterol 24-C-methyltransferase ERG6 catalyzes the methyl transfer from S-adenosyl-methionine to the C-24 of zymosterol to form fecosterol. The C-8 sterol isomerase ERG2 catalyzes the reaction which results in unsaturation at C-7 in the B ring of sterols and thus converts fecosterol to episterol. The sterol-C5-desaturase ERG3 then catalyzes the introduction of a C-5 double bond in the B ring to produce 5-dehydroepisterol. The C-22 sterol desaturase ERG5 further converts 5-dehydroepisterol into ergosta-5,7,22,24(28)-tetraen-3beta-ol by forming the C-22(23) double bond in the sterol side chain. Finally, ergosta-5,7,22,24(28)-tetraen-3beta-ol is substrate of the C-24(28) sterol reductase ERG4 to produce ergosterol. The polypeptide is Delta(7)-sterol 5(6)-desaturase ERG3 (Saccharomyces cerevisiae (strain ATCC 204508 / S288c) (Baker's yeast)).